The following is a 210-amino-acid chain: MKLKFCGFTSIKDVTAASQLPIDAIGFIHYEKSKRHQTITQIKKLASAVPNHIDKVCVMVNPDLTTIEHVLSNTSINTIQLHGTESIDFIQEIKKKYSSIKITKALAADENIIQNINKYKGFVDLFIIDTPSVSYGGTGQTYDWTILKHIKDIPYLIAGGINSENIQTVNQLKLSHQGYDLASGIEVNGRKDIEKMTAIVNIVKGDRDNE.

This sequence belongs to the TrpF family.

The enzyme catalyses N-(5-phospho-beta-D-ribosyl)anthranilate = 1-(2-carboxyphenylamino)-1-deoxy-D-ribulose 5-phosphate. It functions in the pathway amino-acid biosynthesis; L-tryptophan biosynthesis; L-tryptophan from chorismate: step 3/5. This is N-(5'-phosphoribosyl)anthranilate isomerase from Staphylococcus aureus (strain Mu3 / ATCC 700698).